We begin with the raw amino-acid sequence, 236 residues long: Ribonuclease PH (236 aa).

Residues arginine 86 and 124 to 126 (GTR) contribute to the phosphate site.

It belongs to the RNase PH family. In terms of assembly, homohexameric ring arranged as a trimer of dimers.

The enzyme catalyses tRNA(n+1) + phosphate = tRNA(n) + a ribonucleoside 5'-diphosphate. Its function is as follows. Phosphorolytic 3'-5' exoribonuclease that plays an important role in tRNA 3'-end maturation. Removes nucleotide residues following the 3'-CCA terminus of tRNAs; can also add nucleotides to the ends of RNA molecules by using nucleoside diphosphates as substrates, but this may not be physiologically important. Probably plays a role in initiation of 16S rRNA degradation (leading to ribosome degradation) during starvation. The polypeptide is Ribonuclease PH (Thermodesulfovibrio yellowstonii (strain ATCC 51303 / DSM 11347 / YP87)).